A 38-amino-acid chain; its full sequence is Photosystem II reaction center protein L (38 aa).

Residues 17–37 traverse the membrane as a helical segment; it reads SLYWGLLLIFVLAVPFSNYFF.

It belongs to the PsbL family. As to quaternary structure, PSII is composed of 1 copy each of membrane proteins PsbA, PsbB, PsbC, PsbD, PsbE, PsbF, PsbH, PsbI, PsbJ, PsbK, PsbL, PsbM, PsbT, PsbX, PsbY, PsbZ, Psb30/Ycf12, at least 3 peripheral proteins of the oxygen-evolving complex and a large number of cofactors. It forms dimeric complexes.

It localises to the plastid. The protein localises to the chloroplast thylakoid membrane. Functionally, one of the components of the core complex of photosystem II (PSII). PSII is a light-driven water:plastoquinone oxidoreductase that uses light energy to abstract electrons from H(2)O, generating O(2) and a proton gradient subsequently used for ATP formation. It consists of a core antenna complex that captures photons, and an electron transfer chain that converts photonic excitation into a charge separation. This subunit is found at the monomer-monomer interface and is required for correct PSII assembly and/or dimerization. The protein is Photosystem II reaction center protein L of Pinus thunbergii (Japanese black pine).